A 770-amino-acid polypeptide reads, in one-letter code: MSSDTGSEYLDEEIRGDELGPSIDDNALAAAASAARLPFDRPTDHELAFFPELWEHKTAVEVFLLLRNSTLATWQYNPLKECTALDVRNNVFPPFNSDLDLIQNIVHYLSRHGLINFGRYVRSTKISRFLVRDRRSVIVIGAGAAGISAATQLESFGFDVIVLEARNCIGGRIHSFKSKSGEIMETGGDTLRKIEDSPMATLLHQVNFEEHGVFDFTSVFVEGRPLNEEKIHLFLDHYKSAHGALNYQAHQCEHRDDQGSFISRQQAYENLLSMCERGTLIKYYNFCKSLETVARAREHHFNQMKQLRMTALMAENQLKKMEEEGNLEQDPVLRRSLKRDIATSLEKFEEVADAFETADNHWQRLNEHPQAKQYMHPGSEFATFNFMLGFEEYLVGAQLEKVQFSCDSMQNKENGVAARLTEGIAELLTQLSEKRKLDIRLKHRVLDIDYSGFEHVLLKVQRENGDIEEMKAAFVVSTLPIGVLKKTIIADERAPTFTPSLPDKKVEAIRNIGCGSVNKCILEFDRVFWTANGGRNQFVTVSPNIKTRGSMNIWSSVPGSKVLCTYIVGEEAMLELPDDVIIQNAMINLQKAFGNNCPRAPISAHITRWHDDELAFGSGAFMSLRTETTSFDDVMEPLKTSDGMSRVYFAGEHTCSSYTSTIQGAWMSGARAAADISNDHIGIGFVDISGTRGQRGDEEEELLIEVDIDGKIPEKDENEAVADIPNAPNAPNAQKPEEIPKIAEEIELVAEAEKAEKAEVQLEPLVPTVE.

The segment at 1–21 (MSSDTGSEYLDEEIRGDELGP) is disordered. An SWIRM domain is found at 28–126 (LAAAASAARL…FGRYVRSTKI (99 aa)). 137-165 (VIVIGAGAAGISAATQLESFGFDVIVLEA) is an FAD binding site. The tract at residues 718–739 (NEAVADIPNAPNAPNAQKPEEI) is disordered.

Belongs to the flavin monoamine oxidase family. As to quaternary structure, probably part of a large repressor complex. Interacts with CoREST protein spr-1. Interacts with chromobox protein homolog hpl-1. The cofactor is FAD.

It is found in the nucleus. The enzyme catalyses N(6),N(6)-dimethyl-L-lysyl(4)-[histone H3] + 2 A + 2 H2O = L-lysyl(4)-[histone H3] + 2 formaldehyde + 2 AH2. Its function is as follows. Histone demethylase that specifically demethylates 'Lys-4' of histone H3, a specific tag for epigenetic transcriptional activation, thereby acting as a corepressor. Acts by oxidizing the substrate by FAD to generate the corresponding imine that is subsequently hydrolyzed. Demethylates both mono- and di-methylated 'Lys-4' of histone H3. May be involved in H3 demethylation in mitotic cells including gut and embryonic cells. Participates in the transcriptional repression of the presenilin protein hop-1. May act via the formation of a multiprotein complex that remodel or modify the chromatin. Together with met-2, set-17 and set-26, required for transgenerational fertility. Plays a role in developmental growth and lifespan regulation in response to ultraviolet-induced damage. The protein is Lysine-specific histone demethylase 1 of Caenorhabditis elegans.